The following is a 1382-amino-acid chain: Hepatocyte growth factor receptor (1382 aa).

The first 24 residues, 1-24 (MKPPTVHIPGIVVLLFTLVQRSSE), serve as a signal peptide directing secretion. The Extracellular portion of the chain corresponds to 25-933 (ECREALRRSG…VIVLPDQNFT (909 aa)). Positions 27–516 (REALRRSGTD…TGKKITKIPL (490 aa)) constitute a Sema domain. Asn38, Asn49, and Asn99 each carry an N-linked (GlcNAc...) asparagine glycan. Cystine bridges form between Cys94–Cys100, Cys97–Cys160, Cys133–Cys141, and Cys173–Cys176. Residues Asn203 and Asn359 are each glycosylated (N-linked (GlcNAc...) asparagine). 2 cysteine pairs are disulfide-bonded: Cys299–Cys364 and Cys386–Cys398. Residues Asn400, Asn406, Asn450, and Asn495 are each glycosylated (N-linked (GlcNAc...) asparagine). Cystine bridges form between Cys521–Cys539, Cys527–Cys562, Cys530–Cys546, and Cys542–Cys552. IPT/TIG domains are found at residues 564-656 (PTIF…FSYV), 658-740 (PKIT…FIYK), and 743-837 (PVIH…LIYV). Thr583 carries O-linked (Man) threonine glycosylation. Residues Asn608, Asn616, and Asn636 are each glycosylated (N-linked (GlcNAc...) asparagine). Residues Thr677 and Thr762 are each glycosylated (O-linked (Man) threonine). Residues Asn769, Asn786, Asn880, and Asn931 are each glycosylated (N-linked (GlcNAc...) asparagine). A helical membrane pass occupies residues 934–956 (GLIAGVASISVLLLLFLGLFLWM). The Cytoplasmic portion of the chain corresponds to 957 to 1382 (KKKKQIKDLG…QDAPDRVVDT (426 aa)). Ser967 carries the post-translational modification Phosphoserine. A Phosphothreonine modification is found at Thr978. A phosphoserine mark is found at Ser991, Ser998, and Ser1001. Tyr1004 carries the phosphotyrosine modification. Positions 1079–1346 (VHFTEIIGRG…KIAVIFSTFI (268 aa)) constitute a Protein kinase domain. Residues 1085 to 1093 (IGRGHFGCV) and Lys1111 each bind ATP. Asp1205 acts as the Proton acceptor in catalysis. The interaction with RANBP9 stretch occupies residues 1213–1382 (LDEKFTVKVA…QDAPDRVVDT (170 aa)). Residue Tyr1231 is modified to Phosphotyrosine. Residues Tyr1235 and Tyr1236 each carry the phosphotyrosine; by autocatalysis modification. At Thr1290 the chain carries Phosphothreonine. Residues 1321–1360 (WHPNAEMRPSFSELVSKIAVIFSTFIGEHYVHVNATYVNV) are interaction with MUC20. Phosphotyrosine; by autocatalysis is present on residues Tyr1350 and Tyr1357. Position 1366 is a phosphotyrosine (Tyr1366).

This sequence belongs to the protein kinase superfamily. Tyr protein kinase family. In terms of assembly, heterodimer made of an alpha chain (50 kDa) and a beta chain (145 kDa) which are disulfide linked. Binds PLXNB1. Interacts when phosphorylated with downstream effectors including STAT3, PIK3R1, SRC, PCLG1, GRB2 and GAB1. Interacts with SPSB1, SPSB2 and SPSB4. Interacts with INPP5D/SHIP1. When phosphorylated at Tyr-1357, interacts with INPPL1/SHIP2. Interacts with RANBP9 and RANBP10, as well as SPSB1, SPSB2, SPSB3 and SPSB4. SPSB1 binding occurs in the presence and in the absence of HGF, however HGF treatment has a positive effect on this interaction. Interacts with MUC20; prevents interaction with GRB2 and suppresses hepatocyte growth factor-induced cell proliferation. Interacts with GRB10. Interacts with PTPN1 and PTPN2. Interacts with HSP90AA1 and HSP90AB1; the interaction suppresses MET kinase activity. Interacts with tensin TNS3. Interacts (when phosphorylated) with tensin TNS4 (via SH2 domain); the interaction increases MET protein stability by inhibiting MET endocytosis and subsequent lysosomal degradation. In terms of processing, autophosphorylated in response to ligand binding on Tyr-1235 and Tyr-1236 in the kinase domain leading to further phosphorylation of Tyr-1350 and Tyr-1357 in the C-terminal multifunctional docking site. Dephosphorylated by PTPRJ at Tyr-1350 and Tyr-1366. Dephosphorylated by PTPN1 and PTPN2. Post-translationally, ubiquitinated. Ubiquitination by CBL regulates the receptor stability and activity through proteasomal degradation. O-mannosylation of IPT/TIG domains by TMEM260 is required for protein maturation. O-mannosylated residues are composed of single mannose glycans that are not elongated or modified.

The protein resides in the membrane. The catalysed reaction is L-tyrosyl-[protein] + ATP = O-phospho-L-tyrosyl-[protein] + ADP + H(+). Its activity is regulated as follows. In its inactive state, the C-terminal tail interacts with the catalytic domain and inhibits the kinase activity. Upon ligand binding, the C-terminal tail is displaced and becomes phosphorylated, thus increasing the kinase activity. In terms of biological role, receptor tyrosine kinase that transduces signals from the extracellular matrix into the cytoplasm by binding to hepatocyte growth factor/HGF ligand. Regulates many physiological processes including proliferation, scattering, morphogenesis and survival. Ligand binding at the cell surface induces autophosphorylation of MET on its intracellular domain that provides docking sites for downstream signaling molecules. Following activation by ligand, interacts with the PI3-kinase subunit PIK3R1, PLCG1, SRC, GRB2, STAT3 or the adapter GAB1. Recruitment of these downstream effectors by MET leads to the activation of several signaling cascades including the RAS-ERK, PI3 kinase-AKT, or PLCgamma-PKC. The RAS-ERK activation is associated with the morphogenetic effects while PI3K/AKT coordinates prosurvival effects. During embryonic development, MET signaling plays a role in gastrulation, development and migration of muscles and neuronal precursors, angiogenesis and kidney formation. In adults, participates in wound healing as well as organ regeneration and tissue remodeling. Also promotes differentiation and proliferation of hematopoietic cells. The chain is Hepatocyte growth factor receptor (MET) from Ornithorhynchus anatinus (Duckbill platypus).